A 462-amino-acid polypeptide reads, in one-letter code: Argininosuccinate lyase (462 aa).

Belongs to the lyase 1 family. Argininosuccinate lyase subfamily.

The protein localises to the cytoplasm. The enzyme catalyses 2-(N(omega)-L-arginino)succinate = fumarate + L-arginine. It participates in amino-acid biosynthesis; L-arginine biosynthesis; L-arginine from L-ornithine and carbamoyl phosphate: step 3/3. This is Argininosuccinate lyase from Rippkaea orientalis (strain PCC 8801 / RF-1) (Cyanothece sp. (strain PCC 8801)).